A 104-amino-acid chain; its full sequence is Large ribosomal subunit protein bL21c (104 aa).

The protein belongs to the bacterial ribosomal protein bL21 family. As to quaternary structure, part of the 50S ribosomal subunit.

It localises to the plastid. The protein localises to the chloroplast. This protein binds to 23S rRNA. In Pyropia yezoensis (Susabi-nori), this protein is Large ribosomal subunit protein bL21c.